Consider the following 446-residue polypeptide: Argininosuccinate synthase (446 aa).

Residues 17–25 (AFSGGLDTS) and alanine 43 contribute to the ATP site. Tyrosine 99 contributes to the L-citrulline binding site. The ATP site is built by glycine 129 and threonine 131. 3 residues coordinate L-aspartate: threonine 131, asparagine 135, and aspartate 136. Asparagine 135 contributes to the L-citrulline binding site. Aspartate 136 serves as a coordination point for ATP. The L-citrulline site is built by arginine 139 and serine 192. Aspartate 194 is a binding site for ATP. Residues threonine 201, glutamate 203, and glutamate 280 each coordinate L-citrulline.

The protein belongs to the argininosuccinate synthase family. Type 2 subfamily. In terms of assembly, homotetramer.

It is found in the cytoplasm. It carries out the reaction L-citrulline + L-aspartate + ATP = 2-(N(omega)-L-arginino)succinate + AMP + diphosphate + H(+). The protein operates within amino-acid biosynthesis; L-arginine biosynthesis; L-arginine from L-ornithine and carbamoyl phosphate: step 2/3. The polypeptide is Argininosuccinate synthase (Burkholderia thailandensis (strain ATCC 700388 / DSM 13276 / CCUG 48851 / CIP 106301 / E264)).